A 274-amino-acid polypeptide reads, in one-letter code: Rhamnulose-1-phosphate aldolase (274 aa).

Glutamate 117 is an active-site residue. Histidine 141, histidine 143, and histidine 212 together coordinate Zn(2+).

The protein belongs to the aldolase class II family. RhaD subfamily. Homotetramer. It depends on Zn(2+) as a cofactor.

The protein localises to the cytoplasm. It catalyses the reaction L-rhamnulose 1-phosphate = (S)-lactaldehyde + dihydroxyacetone phosphate. Its pathway is carbohydrate degradation; L-rhamnose degradation; glycerone phosphate from L-rhamnose: step 3/3. Catalyzes the reversible cleavage of L-rhamnulose-1-phosphate to dihydroxyacetone phosphate (DHAP) and L-lactaldehyde. The polypeptide is Rhamnulose-1-phosphate aldolase (Escherichia fergusonii (strain ATCC 35469 / DSM 13698 / CCUG 18766 / IAM 14443 / JCM 21226 / LMG 7866 / NBRC 102419 / NCTC 12128 / CDC 0568-73)).